We begin with the raw amino-acid sequence, 239 residues long: MAKLAVNVDHVATLRQARGAAYPEPAAAALAAEAAGADAIVVHLREDRRHINERDVRVIKEVIRTRLILEMAATPKMLGIALSLKPHTVTLVPEKREEITTEGGLDLINHHSSIKQTVEALKNAGIMVSIFIDPDLDQIKMAHRIDADMIEIHTGAFCDAVNEHQRQREFTRIVDAAKIGTRLKLSVNAGHGICYNTIKAFQGLDEIDEFSIGHSIVARAVLTGMDRAVRDMLALIRAL.

Asn-7 serves as a coordination point for 3-amino-2-oxopropyl phosphate. Asp-9–His-10 serves as a coordination point for 1-deoxy-D-xylulose 5-phosphate. Arg-18 serves as a coordination point for 3-amino-2-oxopropyl phosphate. His-43 (proton acceptor) is an active-site residue. The 1-deoxy-D-xylulose 5-phosphate site is built by Arg-45 and His-50. Glu-70 serves as the catalytic Proton acceptor. Thr-100 provides a ligand contact to 1-deoxy-D-xylulose 5-phosphate. The active-site Proton donor is the His-191. Residues Gly-192 and Gly-213–His-214 contribute to the 3-amino-2-oxopropyl phosphate site.

This sequence belongs to the PNP synthase family. Homooctamer; tetramer of dimers.

Its subcellular location is the cytoplasm. The enzyme catalyses 3-amino-2-oxopropyl phosphate + 1-deoxy-D-xylulose 5-phosphate = pyridoxine 5'-phosphate + phosphate + 2 H2O + H(+). It participates in cofactor biosynthesis; pyridoxine 5'-phosphate biosynthesis; pyridoxine 5'-phosphate from D-erythrose 4-phosphate: step 5/5. Its function is as follows. Catalyzes the complicated ring closure reaction between the two acyclic compounds 1-deoxy-D-xylulose-5-phosphate (DXP) and 3-amino-2-oxopropyl phosphate (1-amino-acetone-3-phosphate or AAP) to form pyridoxine 5'-phosphate (PNP) and inorganic phosphate. The polypeptide is Pyridoxine 5'-phosphate synthase (Desulforapulum autotrophicum (strain ATCC 43914 / DSM 3382 / VKM B-1955 / HRM2) (Desulfobacterium autotrophicum)).